Here is a 109-residue protein sequence, read N- to C-terminus: Elongation factor G, chloroplastic (109 aa).

Belongs to the GTP-binding elongation factor family. EF-G/EF-2 subfamily.

The protein resides in the plastid. The protein localises to the chloroplast. The protein operates within protein biosynthesis; polypeptide chain elongation. Chloroplast-localized elongation factor EF-G involved in protein synthesis in plastids. Catalyzes the GTP-dependent ribosomal translocation step during translation elongation. During this step, the ribosome changes from the pre-translocational (PRE) to the post-translocational (POST) state as the newly formed A-site-bound peptidyl-tRNA and P-site-bound deacylated tRNA move to the P and E sites, respectively. Catalyzes the coordinated movement of the two tRNA molecules, the mRNA and conformational changes in the ribosome. The polypeptide is Elongation factor G, chloroplastic (Arachis hypogaea (Peanut)).